The chain runs to 100 residues: Large ribosomal subunit protein uL23 (100 aa).

The protein belongs to the universal ribosomal protein uL23 family. In terms of assembly, part of the 50S ribosomal subunit. Contacts protein L29, and trigger factor when it is bound to the ribosome.

One of the early assembly proteins it binds 23S rRNA. One of the proteins that surrounds the polypeptide exit tunnel on the outside of the ribosome. Forms the main docking site for trigger factor binding to the ribosome. This is Large ribosomal subunit protein uL23 from Corynebacterium aurimucosum (strain ATCC 700975 / DSM 44827 / CIP 107346 / CN-1) (Corynebacterium nigricans).